Reading from the N-terminus, the 654-residue chain is Peptide-N(4)-(N-acetyl-beta-glucosaminyl)asparagine amidase (654 aa).

Alanine 2 carries the post-translational modification N-acetylalanine. Residues glutamate 30 to lysine 91 enclose the PUB domain. The disordered stretch occupies residues arginine 112–serine 163. A compositionally biased stretch (polar residues) spans serine 124 to serine 163. Residue threonine 137 is modified to Phosphothreonine. The Zn(2+) site is built by cysteine 250, cysteine 253, cysteine 283, and cysteine 286. Residue cysteine 309 is the Nucleophile of the active site. Active-site residues include histidine 336 and aspartate 353. Residues glutamate 454–leucine 654 enclose the PAW domain.

It belongs to the transglutaminase-like superfamily. PNGase family. In terms of assembly, component of a complex required to couple retrotranslocation, ubiquitination and deglycosylation composed of NGLY1, SAKS1, AMFR, VCP and RAD23B. Interacts with the proteasome components RAD23B and PSMC1. Interacts with directly with VCP. Interacts with DERL1, bringing it close to the endoplasmic reticulum membrane. Interacts with SAKS1. It depends on Zn(2+) as a cofactor.

It is found in the cytoplasm. The enzyme catalyses Hydrolysis of an N(4)-(acetyl-beta-D-glucosaminyl)asparagine residue in which the glucosamine residue may be further glycosylated, to yield a (substituted) N-acetyl-beta-D-glucosaminylamine and a peptide containing an aspartate residue.. Its activity is regulated as follows. Inhibited by Z-VAD-fmk, a well-known caspase inhibitor, which inhibits enzyme activity through covalent binding of the carbohydrate to the single Cys-306 residue. In terms of biological role, specifically deglycosylates the denatured form of N-linked glycoproteins in the cytoplasm and assists their proteasome-mediated degradation. Cleaves the beta-aspartyl-glucosamine (GlcNAc) of the glycan and the amide side chain of Asn, converting Asn to Asp. Prefers proteins containing high-mannose over those bearing complex type oligosaccharides. Can recognize misfolded proteins in the endoplasmic reticulum that are exported to the cytosol to be destroyed and deglycosylate them, while it has no activity toward native proteins. Deglycosylation is a prerequisite for subsequent proteasome-mediated degradation of some, but not all, misfolded glycoproteins. The polypeptide is Peptide-N(4)-(N-acetyl-beta-glucosaminyl)asparagine amidase (NGLY1) (Homo sapiens (Human)).